The chain runs to 413 residues: Transcription factor bHLH23 (413 aa).

The disordered stretch occupies residues 40 to 75 (SSQTQTPSCDPPLILRGSGSGDGEGNGPLPQPPPPL). The residue at position 186 (threonine 186) is a Phosphothreonine. Serine 191 carries the phosphoserine modification. 2 disordered regions span residues 232–278 (TEPV…RSRA) and 391–413 (ETEQETMSLLLREDKRTKQKMFS). Basic and acidic residues predominate over residues 246–257 (TDERKRKTREET). In terms of domain architecture, bHLH spans 277-326 (RAAIMHKLSERRRRQKINEMMKALQELLPRCTKTDRSSMLDDVIEYVKSL).

As to quaternary structure, homodimer. As to expression, expressed constitutively in leaves, stems, and flowers.

It localises to the nucleus. This Arabidopsis thaliana (Mouse-ear cress) protein is Transcription factor bHLH23 (BHLH23).